The primary structure comprises 578 residues: Zinc finger protein with KRAB and SCAN domains 8 (578 aa).

Positions 1–20 (MAEESRKPSAPSPPDQTPEE) are disordered. Residue Ser12 is modified to Phosphoserine. Lys26 participates in a covalent cross-link: Glycyl lysine isopeptide (Lys-Gly) (interchain with G-Cter in SUMO2). The SCAN box domain maps to 51-133 (RLRFRQLCYQ…TLLEDLERQI (83 aa)). The interval 158–205 (ASAPEPPNTQLQSEATQHKSPVPQESQERAMSTSQSPTRSQKGSSGDQ) is disordered. Over residues 165-205 (NTQLQSEATQHKSPVPQESQERAMSTSQSPTRSQKGSSGDQ) the composition is skewed to polar residues. Residues Lys176 and Lys199 each participate in a glycyl lysine isopeptide (Lys-Gly) (interchain with G-Cter in SUMO2) cross-link. Phosphoserine is present on Ser201. Residues 220-316 (EKIEDMAVSL…GRLERQRGNP (97 aa)) enclose the KRAB domain. Glycyl lysine isopeptide (Lys-Gly) (interchain with G-Cter in SUMO2) cross-links involve residues Lys221, Lys272, and Lys288. 2 C2H2-type zinc fingers span residues 322–344 (HKCD…WRIH) and 350–372 (YQCN…QDIH). Glycyl lysine isopeptide (Lys-Gly) (interchain with G-Cter in SUMO2) cross-links involve residues Lys374 and Lys376. 7 C2H2-type zinc fingers span residues 378–400 (YHCK…QRIH), 406–428 (YQCN…QRIH), 434–456 (YECN…QRIH), 462–484 (YECD…QRSH), 490–512 (YKCN…QRIH), 518–540 (YKCK…LRIH), and 546–568 (YQCN…QRIH). Glycyl lysine isopeptide (Lys-Gly) (interchain with G-Cter in SUMO2) cross-links involve residues Lys413 and Lys441. Residue Lys502 forms a Glycyl lysine isopeptide (Lys-Gly) (interchain with G-Cter in SUMO2) linkage. Lys572 participates in a covalent cross-link: Glycyl lysine isopeptide (Lys-Gly) (interchain with G-Cter in SUMO2).

The protein belongs to the krueppel C2H2-type zinc-finger protein family.

The protein resides in the nucleus. May be involved in transcriptional regulation. The sequence is that of Zinc finger protein with KRAB and SCAN domains 8 (ZKSCAN8) from Pan troglodytes (Chimpanzee).